A 403-amino-acid polypeptide reads, in one-letter code: Subtilisin-like protease CPC735_035780 (403 aa).

A signal peptide spans 1–19 (MSIMKIATLFFAALSAVEA). Positions 20 to 117 (AKLLTPSDKR…VEPDRRVHLT (98 aa)) are excised as a propeptide. An Inhibitor I9 domain is found at 35-116 (SYIVVMKDNV…YVEPDRRVHL (82 aa)). One can recognise a Peptidase S8 domain in the interval 127–403 (SWGLGRISHR…NKLLYNNSGR (277 aa)). Active-site charge relay system residues include Asp-159 and His-190. N-linked (GlcNAc...) asparagine glycans are attached at residues Asn-233 and Asn-251. Ser-349 acts as the Charge relay system in catalysis. Asn-399 is a glycosylation site (N-linked (GlcNAc...) asparagine).

The protein belongs to the peptidase S8 family.

The protein localises to the secreted. Its function is as follows. Secreted subtilisin-like serine protease with keratinolytic activity that contributes to pathogenicity. In Coccidioides posadasii (strain C735) (Valley fever fungus), this protein is Subtilisin-like protease CPC735_035780.